A 446-amino-acid polypeptide reads, in one-letter code: ATP synthase subunit b-delta (446 aa).

Residues 1-168 form an ATP synthase subunit b region; that stretch reads MSTFIGQLVG…PKGADVEYPL (168 aa). The helical transmembrane segment at 4 to 24 threads the bilayer; it reads FIGQLVGFAAIVYLVWWYVVP. The segment at 169 to 446 is ATP synthase subunit delta; sequence LAKMRSASRR…LVAAEAALPD (278 aa).

The protein in the N-terminal section; belongs to the ATPase B chain family. This sequence in the C-terminal section; belongs to the ATPase delta chain family. As to quaternary structure, F-type ATPases have 2 components, F(1) - the catalytic core - and F(0) - the membrane proton channel. F(1) has five subunits: alpha(3), beta(3), gamma(1), delta(1), epsilon(1). F(0) has three main subunits: a(1), b(2) and c(10-14). The alpha and beta chains form an alternating ring which encloses part of the gamma chain. F(1) is attached to F(0) by a central stalk formed by the gamma and epsilon chains, while a peripheral stalk is formed by the delta and b chains.

It localises to the cell membrane. F(1)F(0) ATP synthase produces ATP from ADP in the presence of a proton or sodium gradient. F-type ATPases consist of two structural domains, F(1) containing the extramembraneous catalytic core and F(0) containing the membrane proton channel, linked together by a central stalk and a peripheral stalk. During catalysis, ATP synthesis in the catalytic domain of F(1) is coupled via a rotary mechanism of the central stalk subunits to proton translocation. In terms of biological role, this fusion protein includes a component of the F(0) channel (subunit b) and of the F(1) subunit (subunit delta). Two copies of subunit b and one of delta together form the peripheral 'stator' stalk which links F(1) to F(0). The polypeptide is ATP synthase subunit b-delta (atpFH) (Mycobacterium leprae (strain Br4923)).